Here is a 544-residue protein sequence, read N- to C-terminus: GMP synthase [glutamine-hydrolyzing] (544 aa).

One can recognise a Glutamine amidotransferase type-1 domain in the interval 12 to 210; sequence TILILDFGSQ…VKNVCSVRDG (199 aa). The Nucleophile role is filled by Cys88. Catalysis depends on residues His184 and Glu186. Residues 211–419 form the GMPS ATP-PPase domain; that stretch reads WSMESFIPKE…LNIPEHLVGR (209 aa). ATP is bound at residue 239 to 245; it reads SGGVDST. Residues Arg312, Asp481, Lys536, and Glu542 each contribute to the XMP site.

As to quaternary structure, homodimer. Also forms a small population of homotetramers. It depends on Mg(2+) as a cofactor.

Its subcellular location is the cytoplasm. It is found in the cytosol. It carries out the reaction XMP + L-glutamine + ATP + H2O = GMP + L-glutamate + AMP + diphosphate + 2 H(+). The protein operates within purine metabolism; GMP biosynthesis; GMP from XMP (L-Gln route): step 1/1. In terms of biological role, catalyzes the conversion of xanthine monophosphate (XMP) to GMP in the presence of glutamine and ATP through an adenyl-XMP intermediate. The protein is GMP synthase [glutamine-hydrolyzing] of Cryptococcus neoformans var. neoformans serotype D (strain JEC21 / ATCC MYA-565) (Filobasidiella neoformans).